We begin with the raw amino-acid sequence, 396 residues long: Elongation factor Tu (396 aa).

Residues 10–206 (KPHVNVGTIG…AMDEYIPTPE (197 aa)) enclose the tr-type G domain. The tract at residues 19–26 (GHVDHGKT) is G1. 19–26 (GHVDHGKT) provides a ligand contact to GTP. T26 is a Mg(2+) binding site. The G2 stretch occupies residues 60 to 64 (GITIA). The segment at 81–84 (DCPG) is G3. Residues 81 to 85 (DCPGH) and 136 to 139 (NKAD) each bind GTP. Positions 136 to 139 (NKAD) are G4. Residues 174 to 176 (SAL) are G5.

The protein belongs to the TRAFAC class translation factor GTPase superfamily. Classic translation factor GTPase family. EF-Tu/EF-1A subfamily. As to quaternary structure, monomer.

The protein resides in the cytoplasm. The catalysed reaction is GTP + H2O = GDP + phosphate + H(+). In terms of biological role, GTP hydrolase that promotes the GTP-dependent binding of aminoacyl-tRNA to the A-site of ribosomes during protein biosynthesis. This Alkalilimnicola ehrlichii (strain ATCC BAA-1101 / DSM 17681 / MLHE-1) protein is Elongation factor Tu.